The chain runs to 156 residues: Transcription antitermination protein NusB (156 aa).

It belongs to the NusB family.

Functionally, involved in transcription antitermination. Required for transcription of ribosomal RNA (rRNA) genes. Binds specifically to the boxA antiterminator sequence of the ribosomal RNA (rrn) operons. This Rickettsia bellii (strain OSU 85-389) protein is Transcription antitermination protein NusB.